The chain runs to 493 residues: Aspartate-semialdehyde dehydrogenase (Non-phosphorylating) (493 aa).

NADP(+)-binding positions include 160–161 (WN), 184–187 (KPAH), and 237–238 (GS). Glutamate 259 serves as the catalytic Proton acceptor. Leucine 260 contacts NADP(+). The active-site Nucleophile is cysteine 293. Glutamate 390 provides a ligand contact to NADP(+).

This sequence belongs to the aldehyde dehydrogenase family.

It localises to the cytoplasm. It catalyses the reaction L-aspartate 4-semialdehyde + NAD(+) + H2O = L-aspartate + NADH + 2 H(+). In terms of biological role, involved in the degradation of ectoine, which allows H.elongata to utilize ectoine as both a carbon and a nitrogen source for growth. Probably catalyzes the NAD(+)-dependent oxidation of L-aspartate-semialdehyde to L-aspartate. This Halomonas elongata (strain ATCC 33173 / DSM 2581 / NBRC 15536 / NCIMB 2198 / 1H9) protein is Aspartate-semialdehyde dehydrogenase (Non-phosphorylating).